Reading from the N-terminus, the 548-residue chain is Biotin-dependent acetyl-/propionyl-coenzyme A carboxylase beta5 subunit (548 aa).

Residues 1 to 23 are disordered; the sequence is MTSVTDRSAHSAERSTEHTIDIH. The segment covering 7–21 has biased composition (basic and acidic residues); sequence RSAHSAERSTEHTID. A CoA carboxyltransferase N-terminal domain is found at 25–281; that stretch reads TAGKLAELHK…NNSTDAPRYQ (257 aa). In terms of domain architecture, CoA carboxyltransferase C-terminal spans 295 to 541; that stretch reads DEDLELDTLI…ERKIAQLPPK (247 aa).

It belongs to the AccD/PCCB family. As to quaternary structure, the biotin-dependent acyl-CoA carboxylase complex is composed of AccA3, which contains the biotin carboxylase (BC) and biotin carboxyl carrier protein (BCCP) domains, and AccD5, which contains the carboxyl transferase (CT) domain.

It carries out the reaction N(6)-carboxybiotinyl-L-lysyl-[protein] + acetyl-CoA = N(6)-biotinyl-L-lysyl-[protein] + malonyl-CoA. The enzyme catalyses N(6)-carboxybiotinyl-L-lysyl-[protein] + propanoyl-CoA = methylmalonyl-CoA + N(6)-biotinyl-L-lysyl-[protein]. The protein operates within lipid metabolism; mycolic acid biosynthesis. In terms of biological role, component of a biotin-dependent acyl-CoA carboxylase complex. This subunit transfers the CO2 from carboxybiotin to the CoA ester substrate. When associated with the alpha3 subunit AccA3, is involved in the carboxylation of acetyl-CoA and propionyl-CoA. This is Biotin-dependent acetyl-/propionyl-coenzyme A carboxylase beta5 subunit (accD5) from Mycobacterium tuberculosis (strain CDC 1551 / Oshkosh).